The following is a 601-amino-acid chain: DNA ligase (601 aa).

An ATP-binding site is contributed by Asp258. The active-site N6-AMP-lysine intermediate is Lys260. 6 residues coordinate ATP: Arg265, Arg280, Glu310, Phe350, Arg427, and Lys433. Residues 568–601 are disordered; sequence DKSPEDATTTDEILEMYNKQPKKKIESPPIDESV.

This sequence belongs to the ATP-dependent DNA ligase family. The cofactor is Mg(2+).

It carries out the reaction ATP + (deoxyribonucleotide)n-3'-hydroxyl + 5'-phospho-(deoxyribonucleotide)m = (deoxyribonucleotide)n+m + AMP + diphosphate.. Its function is as follows. DNA ligase that seals nicks in double-stranded DNA during DNA replication, DNA recombination and DNA repair. In Saccharolobus islandicus (strain Y.G.57.14 / Yellowstone #1) (Sulfolobus islandicus), this protein is DNA ligase.